We begin with the raw amino-acid sequence, 819 residues long: Leucine--tRNA ligase (819 aa).

The 'HIGH' region motif lies at 42 to 53 (PYPSGAKLHIGH). The 'KMSKS' region motif lies at 578–582 (RMSKS). Lysine 581 contributes to the ATP binding site.

This sequence belongs to the class-I aminoacyl-tRNA synthetase family.

The protein localises to the cytoplasm. The catalysed reaction is tRNA(Leu) + L-leucine + ATP = L-leucyl-tRNA(Leu) + AMP + diphosphate. This Caldanaerobacter subterraneus subsp. tengcongensis (strain DSM 15242 / JCM 11007 / NBRC 100824 / MB4) (Thermoanaerobacter tengcongensis) protein is Leucine--tRNA ligase.